We begin with the raw amino-acid sequence, 803 residues long: Xylosyltransferase sqv-6 (803 aa).

At 3–13 the chain is on the cytoplasmic side; sequence VVGGVNTNYRH. A helical; Signal-anchor for type II membrane protein membrane pass occupies residues 14-34; that stretch reads YALVIVLFFFLNVYLLYSAQN. Residues 35-803 are Lumenal-facing; the sequence is SVQIRKDEGE…GWDEEARILR (769 aa). C63 and C91 are joined by a disulfide. 3 N-linked (GlcNAc...) asparagine glycosylation sites follow: N95, N175, and N224. Disulfide bonds link C107/C446, C465/C479, and C467/C477. Residues 115–209 form the WSC domain; sequence IDQRIGCFLD…FNAVEIFRTD (95 aa). Residues D265 and 294–296 each bind UDP-alpha-D-xylose; that span reads TIW. An N-linked (GlcNAc...) asparagine glycan is attached at N326. 399 to 400 is a UDP-alpha-D-xylose binding site; that stretch reads DW. UDP-alpha-D-xylose is bound by residues S480 and 506–507; that span reads RK. 2 N-linked (GlcNAc...) asparagine glycosylation sites follow: N615 and N718. The cysteines at positions 769 and 775 are disulfide-linked.

The protein belongs to the glycosyltransferase 14 family. XylT subfamily. Requires a divalent metal cation as cofactor.

It localises to the endoplasmic reticulum membrane. The protein resides in the golgi apparatus membrane. It catalyses the reaction UDP-alpha-D-xylose + L-seryl-[protein] = 3-O-(beta-D-xylosyl)-L-seryl-[protein] + UDP + H(+). Its pathway is glycan metabolism; chondroitin sulfate biosynthesis. The protein operates within glycan metabolism; heparan sulfate biosynthesis. Its function is as follows. Catalyzes the first step in biosynthesis of glycosaminoglycan. Transfers D-xylose from UDP-D-xylose to specific serine residues of the core protein. This chain is Xylosyltransferase sqv-6, found in Caenorhabditis briggsae.